Consider the following 684-residue polypeptide: Rabphilin-3A (684 aa).

The disordered stretch occupies residues 1–21 (MTDTVVNRWMYPGDGPLQSND). The region spanning 40-157 (QRKQEELTDE…KRSGAWFFKG (118 aa)) is the RabBD domain. The FYVE-type zinc-finger motif lies at 88-145 (GDGVNRCILCGEQLGMLGSACVVCEDCKKNVCTKCGVETSNNRPHPVWLCKICLEQRE). 8 residues coordinate Zn(2+): C94, C97, C111, C114, C119, C122, C137, and C140. A disordered region spans residues 162 to 377 (VLPQPMPIKK…EEEEANSYDS (216 aa)). Positions 199-208 (ARGDMEDRRA) are enriched in basic and acidic residues. R223 carries the post-translational modification Omega-N-methylarginine. The span at 243 to 252 (RDSEGWDHGH) shows a compositional bias: basic and acidic residues. The residue at position 274 (S274) is a Phosphoserine. Positions 283 to 299 (ASMPSPAPPQPVQPGPP) are enriched in pro residues. Low complexity predominate over residues 301–310 (GSRAAPGPGR). Residues 382–504 (TLGALEFSLL…KANQRKNFNI (123 aa)) enclose the C2 1 domain. Residues M412, D413, D419, D474, E475, D476, E482, E529, D571, D577, D631, Y632, D633, and D639 each coordinate Ca(2+). The 134-residue stretch at 540-673 (ERGKILVSLM…NKDKKIERWH (134 aa)) folds into the C2 2 domain. Phosphoserine occurs at positions 682 and 683.

In terms of assembly, interacts with RAB3B, RAB3C, RAB3D, RAB8A, RAB27A and RAB27B. Interacts with RAB3A; this interaction recruits RPH3A to synaptic vesicules. Interacts (via C2B domain) with SNAP25. Interacts with deubiquitinating enzyme CAND1; this interaction results in the deubiquitination of RPH3A. Interacts with GRIN2A and DLG4; this ternary complex regulates NMDA receptor composition at postsynaptic membranes. Interacts with SNCA. The cofactor is Ca(2+). Ubiquitinated. Deubiquitinated by CAND1 to prevent its degradation. Specifically expressed in brain.

The protein localises to the cytoplasmic vesicle. The protein resides in the secretory vesicle. It localises to the synaptic vesicle membrane. It is found in the cell projection. Its subcellular location is the dendritic spine. The protein localises to the postsynaptic cell membrane. The protein resides in the membrane. Plays an essential role in docking and fusion steps of regulated exocytosis. At the presynaptic level, RPH3A is recruited by RAB3A to the synaptic vesicle membrane in a GTP-dependent manner where it modulates synaptic vesicle trafficking and calcium-triggered neurotransmitter release. In the post-synaptic compartment, forms a ternary complex with GRIN2A and DLG4 and regulates NMDA receptor stability. Also plays a role in the exocytosis of arginine vasopressin hormone. The sequence is that of Rabphilin-3A (Rph3a) from Rattus norvegicus (Rat).